Here is a 427-residue protein sequence, read N- to C-terminus: Indole diterpene prenyltransferase penD (427 aa).

L-tryptophan is bound at residue 77–78 (YV). Positions 99, 186, 188, 259, 261, 263, 344, 409, and 413 each coordinate substrate.

It belongs to the tryptophan dimethylallyltransferase family.

It participates in secondary metabolite biosynthesis. Its function is as follows. Indole diterpene prenyltransferase; part of the gene cluster that mediates the biosynthesis of the indole diterpenes penitrems. The geranylgeranyl diphosphate (GGPP) synthase penG catalyzes the first step in penitrem biosynthesis via conversion of farnesyl pyrophosphate and isopentyl pyrophosphate into geranylgeranyl pyrophosphate (GGPP). Condensation of indole-3-glycerol phosphate with GGPP by the prenyl transferase penC then forms 3-geranylgeranylindole (3-GGI). Epoxidation by the FAD-dependent monooxygenase penM leads to a epoxidized-GGI that is substrate of the terpene cyclase penB for cyclization to yield paspaline. Paspaline is subsequently converted to 13-desoxypaxilline by the cytochrome P450 monooxygenase penP, the latter being then converted to paxilline by the cytochrome P450 monooxygenase penQ. Paxilline is converted to beta-paxitriol via C-10 ketoreduction by the short-chain dehydrogenase PC-15 which can be monoprenylated at the C-20 by the indole diterpene prenyltransferase penD. A two-step elimination (acetylation and elimination) process performed by the O-acetyltransferase PC-16 and the P.simplicissimum ptmI-ortholog not yet identified in P.crustosum, leads to the production of the prenylated form of penijanthine. The FAD-linked oxidoreductase ptmO then converts the prenylated form of penijanthine into PC-M5 which is in turn transformed into PC-M4 by the aromatic dimethylallyltransferase PC-22. A series of oxidation steps involving 4 cytochrome P450 monooxygenases (PC-21, PC-05, PC-23, PC-20) and a FAD-dependent monooxygenase (PC-14) are required for the transformation of PC-M4 to penitrems A and E. Synthesis of these final products is proposed to proceed via penitrems D and C (PC-21, PC-05, PC-14) and penitrems B and F (PC-21, PC-05, PC-14, PC-23). The polypeptide is Indole diterpene prenyltransferase penD (Penicillium crustosum (Blue mold fungus)).